Here is a 206-residue protein sequence, read N- to C-terminus: Shieldin complex subunit 1 (206 aa).

Positions 27–94 are disordered; the sequence is SSYEASQRVS…GQLETNEEED (68 aa). The segment covering 32–55 has biased composition (low complexity); sequence SQRVSQGSSNSLSSLESHPFLSSS. Residues 56 to 74 are compositionally biased toward polar residues; sequence TTDPDSNSLNTEQKGSWDS.

In terms of assembly, component of the shieldin complex, consisting of SHLD1, SHLD2, SHLD3 and MAD2L2/REV7. Within the complex, SHLD2 forms a scaffold which interacts with a SHLD3-MAD2L2 subcomplex via its N-terminus, and with SHLD1 via its C-terminus. Interacts with ASTE1.

Its subcellular location is the chromosome. Component of the shieldin complex, which plays an important role in repair of DNA double-stranded breaks (DSBs). During G1 and S phase of the cell cycle, the complex functions downstream of TP53BP1 to promote non-homologous end joining (NHEJ) and suppress DNA end resection. Mediates various NHEJ-dependent processes including immunoglobulin class-switch recombination, and fusion of unprotected telomeres. The polypeptide is Shieldin complex subunit 1 (Mus musculus (Mouse)).